We begin with the raw amino-acid sequence, 85 residues long: uncharacterized protein (85 aa).

This is an uncharacterized protein from Methanocaldococcus jannaschii (strain ATCC 43067 / DSM 2661 / JAL-1 / JCM 10045 / NBRC 100440) (Methanococcus jannaschii).